Reading from the N-terminus, the 328-residue chain is V-type sodium ATPase subunit C (328 aa).

This sequence belongs to the V-ATPase V0D/AC39 subunit family.

In terms of biological role, involved in ATP-driven sodium extrusion. The protein is V-type sodium ATPase subunit C (ntpC) of Enterococcus hirae (strain ATCC 9790 / DSM 20160 / JCM 8729 / LMG 6399 / NBRC 3181 / NCIMB 6459 / NCDO 1258 / NCTC 12367 / WDCM 00089 / R).